We begin with the raw amino-acid sequence, 365 residues long: Zinc finger TRAF-type-containing protein 1-B (365 aa).

The tract at residues 1-56 (MSEEREAPGPLASSSAGLGAEVGQEEVPGGAGPARLLLLPSDSDGPPKKRLRSEAE) is disordered. The RING-type; degenerate zinc-finger motif lies at 72–117 (CAVCLDLPKASVYQCTNGHLMCAGCFIHLLADARLKEEQATCPNCR). The TRAF-type zinc-finger motif lies at 113–186 (CPNCRCEISK…PWQGPYHELT (74 aa)).

Belongs to the ZFTRAF1 family. In terms of assembly, interacts with LGALS3.

The protein resides in the cytoplasm. This Xenopus laevis (African clawed frog) protein is Zinc finger TRAF-type-containing protein 1-B.